Reading from the N-terminus, the 503-residue chain is MASGDLYEVERIVDKRKNKKGKWEYLIRWKGYGSTEDTWEPEHHLLHCEEFIDEFNGLHLSKDKRVKSGKQAGASKLLRDARGLPVERLSHRPLEPGKSKPSSHKRKRVNSPLSRPKKGSSGKAPDRATKTVSYRTTPSGLQIMPLKKAQNGLENGDAGSEKDESHFGNGSHQPDLELNDQLGEQEASDCDGTHSALVENGVGSALTNGGLNLHSPVKRKLETEKDYVFDKRLRYSVRQNESNCRFRDIVVRKEEGFTHILLSSQTSDNNALTPEIMKEVRRALCNAATDDSKLLLLSAVGSVFCSGLDYSYLIGRLSSDRRKESTRIAEAIRDFVKAFIQFKKPIVVAINGPALGLGASILPLCDIVWASEKAWFQTPYATIRLTPAGCSSYTFPQILGVALANEMLFCGRKLTAQEACSRGLVSQVFWPTTFSQEVMLRVKEMASCSAVVLEESKCLVRSFLKSVLEEVNEKECVMLKQLWSSSKGLDSLFSYLQDKIYEV.

One can recognise a Chromo domain in the interval 7–67 (YEVERIVDKR…LHLSKDKRVK (61 aa)). Residues 66 to 177 (VKSGKQAGAS…GNGSHQPDLE (112 aa)) form a disordered region. Over residues 88 to 98 (RLSHRPLEPGK) the composition is skewed to basic and acidic residues. Positions 101–120 (PSSHKRKRVNSPLSRPKKGS) are enriched in basic residues. Polar residues predominate over residues 130–140 (KTVSYRTTPSG).

As to quaternary structure, interacts (via chromo domain) with histone H3K9me3.

The protein resides in the nucleus. The protein is Chromodomain Y-like protein 2 (Cdyl2) of Mus musculus (Mouse).